The chain runs to 291 residues: Elongation factor Ts (291 aa).

The tract at residues Thr79–Val82 is involved in Mg(2+) ion dislocation from EF-Tu.

This sequence belongs to the EF-Ts family.

The protein localises to the cytoplasm. Associates with the EF-Tu.GDP complex and induces the exchange of GDP to GTP. It remains bound to the aminoacyl-tRNA.EF-Tu.GTP complex up to the GTP hydrolysis stage on the ribosome. The sequence is that of Elongation factor Ts from Dinoroseobacter shibae (strain DSM 16493 / NCIMB 14021 / DFL 12).